The chain runs to 35 residues: Mu-theraphotoxin-Hhn1a (35 aa).

Cystine bridges form between C2–C17, C9–C24, and C16–C31.

Belongs to the neurotoxin 10 (Hwtx-1) family. 22 (Htx-4) subfamily. Monomer. In terms of tissue distribution, expressed by the venom gland.

The protein resides in the secreted. In terms of biological role, inhibits selectively tetrodotoxin-sensitive voltage-gated sodium channels (Nav). Does not act by binding to receptor site 3 to slow the inactivation kinetics of sodium currents. This chain is Mu-theraphotoxin-Hhn1a, found in Cyriopagopus hainanus (Chinese bird spider).